Reading from the N-terminus, the 286-residue chain is ATP synthase gamma chain (286 aa).

Belongs to the ATPase gamma chain family. As to quaternary structure, F-type ATPases have 2 components, CF(1) - the catalytic core - and CF(0) - the membrane proton channel. CF(1) has five subunits: alpha(3), beta(3), gamma(1), delta(1), epsilon(1). CF(0) has three main subunits: a, b and c.

It is found in the cell inner membrane. In terms of biological role, produces ATP from ADP in the presence of a proton gradient across the membrane. The gamma chain is believed to be important in regulating ATPase activity and the flow of protons through the CF(0) complex. This chain is ATP synthase gamma chain, found in Shewanella amazonensis (strain ATCC BAA-1098 / SB2B).